The sequence spans 390 residues: Formamidopyrimidine-DNA glycosylase (390 aa).

Residue P2 is the Schiff-base intermediate with DNA of the active site. Catalysis depends on E3, which acts as the Proton donor. K60 (proton donor; for beta-elimination activity) is an active-site residue. Y107, R126, K167, and N186 together coordinate DNA. Positions 283–390 (AEKAAKVRPA…AGKKPKGRKS (108 aa)) are disordered. Residues 301-316 (DDGDGEEDEQETEKED) are compositionally biased toward acidic residues. Positions 321-337 (SKKGQKPRGGRGKKPAS) are enriched in basic residues. The segment covering 343–355 (ESDDDGDDSEAEE) has biased composition (acidic residues). The segment covering 360 to 370 (PKGRGTKPAIK) has biased composition (basic residues).

The protein belongs to the FPG family. In terms of assembly, monomer. Expressed in leaves (at protein levels).

The protein resides in the nucleus. The catalysed reaction is Hydrolysis of DNA containing ring-opened 7-methylguanine residues, releasing 2,6-diamino-4-hydroxy-5-(N-methyl)formamidopyrimidine.. The enzyme catalyses 2'-deoxyribonucleotide-(2'-deoxyribose 5'-phosphate)-2'-deoxyribonucleotide-DNA = a 3'-end 2'-deoxyribonucleotide-(2,3-dehydro-2,3-deoxyribose 5'-phosphate)-DNA + a 5'-end 5'-phospho-2'-deoxyribonucleoside-DNA + H(+). Functionally, involved in base excision repair of DNA damaged by oxidation or by mutagenic agents. Acts as a DNA glycosylase that recognizes and removes damaged bases. Can process efficiently 4,6-diamino-5-formamidopyrimidine (FapyA), 2,6-diamino-4- hydroxy-5-formamidopyrimidine (FapyG) and the further oxidation products of 8-oxoguanine (8-oxoG), such as guanidinohydantoin and spiroiminodihydantoin. Has marginal activity towards 8-oxoG. Has AP (apurinic/apyrimidinic) lyase activity. Cleaves the DNA backbone by beta-delta elimination to generate a single-strand break at the site of the removed base with both 3'- and 5'-phosphates. The chain is Formamidopyrimidine-DNA glycosylase (FPG1) from Arabidopsis thaliana (Mouse-ear cress).